We begin with the raw amino-acid sequence, 103 residues long: Putative sulfurtransferase YtwF (103 aa).

One can recognise a Rhodanese domain in the interval 17 to 100; the sequence is ADEELYLIDV…GMMAWEGETK (84 aa). Cysteine 65 acts as the Cysteine persulfide intermediate in catalysis.

This Bacillus subtilis (strain 168) protein is Putative sulfurtransferase YtwF (ytwF).